A 727-amino-acid polypeptide reads, in one-letter code: Translation initiation factor IF-2, mitochondrial (727 aa).

A mitochondrion-targeting transit peptide spans Met1–Met29. Residues Pro178 to Lys348 enclose the tr-type G domain. The interval Gly187–Thr194 is G1. Gly187–Thr194 contributes to the GTP binding site. The G2 stretch occupies residues Gly212–His216. Residues Asp234–Gly237 and Asn288–Asp291 each bind GTP. The tract at residues Asp234 to Gly237 is G3. The tract at residues Asn288–Asp291 is G4. The tract at residues Ser324–Leu326 is G5. Thr688 carries the phosphothreonine modification.

It belongs to the TRAFAC class translation factor GTPase superfamily. Classic translation factor GTPase family. IF-2 subfamily. Monomer.

The protein localises to the mitochondrion. One of the essential components for the initiation of protein synthesis. Protects formylmethionyl-tRNA from spontaneous hydrolysis and promotes its binding to the 30S ribosomal subunits. Also involved in the hydrolysis of GTP during the formation of the 70S ribosomal complex. The chain is Translation initiation factor IF-2, mitochondrial (MTIF2) from Bos taurus (Bovine).